The following is a 437-amino-acid chain: GTPase Obg (437 aa).

Residues 2–160 (SMFLDTAKIS…RQLELELKIL (159 aa)) form the Obg domain. The 178-residue stretch at 161–338 (ADVGLVGFPS…LLEATAELLA (178 aa)) folds into the OBG-type G domain. Residues 167–174 (GFPSVGKS), 192–196 (FTTIV), 214–217 (DLPG), 284–287 (NKMD), and 319–321 (SSL) each bind GTP. Ser-174 and Thr-194 together coordinate Mg(2+). The region spanning 359–437 (GFAETEKNFE…IGKFEFEFVD (79 aa)) is the OCT domain.

This sequence belongs to the TRAFAC class OBG-HflX-like GTPase superfamily. OBG GTPase family. In terms of assembly, monomer. Requires Mg(2+) as cofactor.

The protein resides in the cytoplasm. In terms of biological role, an essential GTPase which binds GTP, GDP and possibly (p)ppGpp with moderate affinity, with high nucleotide exchange rates and a fairly low GTP hydrolysis rate. Plays a role in control of the cell cycle, stress response, ribosome biogenesis and in those bacteria that undergo differentiation, in morphogenesis control. This Streptococcus pyogenes serotype M49 (strain NZ131) protein is GTPase Obg.